We begin with the raw amino-acid sequence, 549 residues long: Glucose-6-phosphate isomerase (549 aa).

The Proton donor role is filled by glutamate 353. Residues histidine 384 and lysine 513 contribute to the active site.

It belongs to the GPI family.

It localises to the cytoplasm. The catalysed reaction is alpha-D-glucose 6-phosphate = beta-D-fructose 6-phosphate. The protein operates within carbohydrate biosynthesis; gluconeogenesis. Its pathway is carbohydrate degradation; glycolysis; D-glyceraldehyde 3-phosphate and glycerone phosphate from D-glucose: step 2/4. In terms of biological role, catalyzes the reversible isomerization of glucose-6-phosphate to fructose-6-phosphate. The chain is Glucose-6-phosphate isomerase from Brucella ovis (strain ATCC 25840 / 63/290 / NCTC 10512).